Consider the following 29-residue polypeptide: Cytochrome b6-f complex subunit 8 (29 aa).

A helical transmembrane segment spans residues 3-23; it reads ILTLGWVSVLTLFTYSIAMVV.

This sequence belongs to the PetN family. In terms of assembly, the 4 large subunits of the cytochrome b6-f complex are cytochrome b6, subunit IV (17 kDa polypeptide, PetD), cytochrome f and the Rieske protein, while the 4 small subunits are PetG, PetL, PetM and PetN. The complex functions as a dimer.

Its subcellular location is the cellular thylakoid membrane. Component of the cytochrome b6-f complex, which mediates electron transfer between photosystem II (PSII) and photosystem I (PSI), cyclic electron flow around PSI, and state transitions. The polypeptide is Cytochrome b6-f complex subunit 8 (Acaryochloris marina (strain MBIC 11017)).